We begin with the raw amino-acid sequence, 472 residues long: ATP-dependent protease ATPase subunit HslU (472 aa).

ATP-binding positions include Ile-20, 62–67 (GVGKTE), Asp-285, Glu-350, and Arg-422.

This sequence belongs to the ClpX chaperone family. HslU subfamily. A double ring-shaped homohexamer of HslV is capped on each side by a ring-shaped HslU homohexamer. The assembly of the HslU/HslV complex is dependent on binding of ATP.

The protein resides in the cytoplasm. Functionally, ATPase subunit of a proteasome-like degradation complex; this subunit has chaperone activity. The binding of ATP and its subsequent hydrolysis by HslU are essential for unfolding of protein substrates subsequently hydrolyzed by HslV. HslU recognizes the N-terminal part of its protein substrates and unfolds these before they are guided to HslV for hydrolysis. The sequence is that of ATP-dependent protease ATPase subunit HslU from Lactiplantibacillus plantarum (strain ATCC BAA-793 / NCIMB 8826 / WCFS1) (Lactobacillus plantarum).